The primary structure comprises 85 residues: Large ribosomal subunit protein bL31B (85 aa).

Belongs to the bacterial ribosomal protein bL31 family. Type B subfamily. In terms of assembly, part of the 50S ribosomal subunit.

This is Large ribosomal subunit protein bL31B from Bifidobacterium longum subsp. infantis (strain ATCC 15697 / DSM 20088 / JCM 1222 / NCTC 11817 / S12).